Consider the following 959-residue polypeptide: Glycine dehydrogenase (decarboxylating) (959 aa).

At Lys-708 the chain carries N6-(pyridoxal phosphate)lysine.

Belongs to the GcvP family. In terms of assembly, the glycine cleavage system is composed of four proteins: P, T, L and H. It depends on pyridoxal 5'-phosphate as a cofactor.

The enzyme catalyses N(6)-[(R)-lipoyl]-L-lysyl-[glycine-cleavage complex H protein] + glycine + H(+) = N(6)-[(R)-S(8)-aminomethyldihydrolipoyl]-L-lysyl-[glycine-cleavage complex H protein] + CO2. The glycine cleavage system catalyzes the degradation of glycine. The P protein binds the alpha-amino group of glycine through its pyridoxal phosphate cofactor; CO(2) is released and the remaining methylamine moiety is then transferred to the lipoamide cofactor of the H protein. This Serratia proteamaculans (strain 568) protein is Glycine dehydrogenase (decarboxylating).